The primary structure comprises 49 residues: MASFEEAEERILDKMICMRCNARNPKRADSCRKCGYKKLRPKAKERRAA.

Belongs to the eukaryotic ribosomal protein eL40 family.

In Natronomonas pharaonis (strain ATCC 35678 / DSM 2160 / CIP 103997 / JCM 8858 / NBRC 14720 / NCIMB 2260 / Gabara) (Halobacterium pharaonis), this protein is Large ribosomal subunit protein eL40.